A 247-amino-acid chain; its full sequence is Carboxy-S-adenosyl-L-methionine synthase (247 aa).

Residues Tyr39, Gly64 to Ser66, Asp89 to Asn90, Asp117 to Ile118, Asn132, and Arg199 each bind S-adenosyl-L-methionine.

This sequence belongs to the class I-like SAM-binding methyltransferase superfamily. Cx-SAM synthase family. As to quaternary structure, homodimer.

It catalyses the reaction prephenate + S-adenosyl-L-methionine = carboxy-S-adenosyl-L-methionine + 3-phenylpyruvate + H2O. Its function is as follows. Catalyzes the conversion of S-adenosyl-L-methionine (SAM) to carboxy-S-adenosyl-L-methionine (Cx-SAM). In Shigella boydii serotype 4 (strain Sb227), this protein is Carboxy-S-adenosyl-L-methionine synthase.